The primary structure comprises 219 residues: Proteasome subunit beta type-9 (219 aa).

A propeptide spans 1 to 20 (MLQAGAPTAGSFRTGEVHTG) (removed in mature form). Threonine 21 serves as the catalytic Nucleophile. Residues lysine 53 and lysine 109 each carry the N6-acetyllysine modification.

This sequence belongs to the peptidase T1B family. As to quaternary structure, the 26S proteasome consists of a 20S proteasome core and two 19S regulatory subunits. The 20S proteasome core is composed of 28 subunits that are arranged in four stacked rings, resulting in a barrel-shaped structure. The two end rings are each formed by seven alpha subunits, and the two central rings are each formed by seven beta subunits. The catalytic chamber with the active sites is on the inside of the barrel. Component of the immunoproteasome, where it displaces the equivalent housekeeping subunit PSMB6. Component of the spermatoproteasome, a form of the proteasome specifically found in testis. Interacts with NCOA2 and NCOA3. Autocleaved. The resulting N-terminal Thr residue of the mature subunit is responsible for the nucleophile proteolytic activity. As to expression, detected in the cytoplasmic lobe of elongated spermatids, in residual bodies, and in the acrosomal cap of round spermatids.

The protein resides in the cytoplasm. It localises to the nucleus. It catalyses the reaction Cleavage of peptide bonds with very broad specificity.. Its function is as follows. The proteasome is a multicatalytic proteinase complex which is characterized by its ability to cleave peptides with Arg, Phe, Tyr, Leu, and Glu adjacent to the leaving group at neutral or slightly basic pH. The proteasome has an ATP-dependent proteolytic activity. This subunit is involved in antigen processing to generate class I binding peptides. This Rattus norvegicus (Rat) protein is Proteasome subunit beta type-9 (Psmb9).